The primary structure comprises 559 residues: Potassium-transporting ATPase potassium-binding subunit (559 aa).

12 helical membrane passes run phenylalanine 6–valine 26, leucine 63–leucine 83, valine 131–leucine 151, isoleucine 173–glycine 193, phenylalanine 253–valine 273, leucine 283–tryptophan 303, phenylalanine 327–valine 347, alanine 356–valine 376, glycine 379–glycine 399, leucine 416–leucine 436, leucine 484–alanine 504, and glycine 524–isoleucine 544.

The protein belongs to the KdpA family. As to quaternary structure, the system is composed of three essential subunits: KdpA, KdpB and KdpC.

It is found in the cell inner membrane. Functionally, part of the high-affinity ATP-driven potassium transport (or Kdp) system, which catalyzes the hydrolysis of ATP coupled with the electrogenic transport of potassium into the cytoplasm. This subunit binds the periplasmic potassium ions and delivers the ions to the membrane domain of KdpB through an intramembrane tunnel. This chain is Potassium-transporting ATPase potassium-binding subunit, found in Enterobacter sp. (strain 638).